An 816-amino-acid chain; its full sequence is MLFNINRQEDDPFTQLINQSSANTQNQQAHQQESPYQFLQKVVSNEPKGKEEWVSPFRQDALANRQNNRAYGEDAKNRKFPTVSATSAYSKQQPKDLGYKNIPKNAKRAKDIRFPTYLTQNEERQYQLLTELELKEKHLKYLKKCQKITDLTKDEKDDTDTTTSSSTSTSSSSSSSSSSSSSSSSDEGDVTSTTTSEATEATADTATTTTTTTSTSTTSTSTTNAVENSADEATSVEEEHEDKVSESTSIGKGTADSAQINVAEPISSENGVLEPRTTDQSGGSKSGVVPTDEQKEEKSDVKKVNPPSGEEKKEVEAEGDAEEETEQSSAEESAERTSTPETSEPESEEDESPIDPSKAPKVPFQEPSRKERTGIFALWKSPTSSSTQKSKTAAPSNPVATPENPELIVKTKEHGYLSKAVYDKINYDEKIHQAWLADLRAKEKDKYDAKNKEYKEKLQDLQNQIDEIENSMKAMREETSEKIEVSKNRLVKKIIDVNAEHNNKKLMILKDTENMKNQKLQEKNEVLDKQTNVKSEIDDLNNEKTNVQKEFNDWTTNLSNLSQQLDAQIFKINQINLKQGKVQNEIDNLEKKKEDLVTQTEENKKLHEKNVQVLESVENKEYLPQINDIDNQISSLLNEVTIIKQENANEKTQLSAITKRLEDERRAHEEQLKLEAEERKRKEENLLEKQRQELEEQAHQAQLDHEQQITQVKQTYNDQLTELQDKLATEEKELEAVKRERTRLQAEKAIEEQTRQKNADEALKQEILSRQHKQAEGIHAAENHKIPNDRSQKNTSVLPKDDSLYEYHTEEDVMYA.

Disordered regions lie at residues 1 to 34, 65 to 101, 154 to 406, and 770 to 816; these read MLFN…QQES, RQNN…GYKN, DEKD…ENPE, and RQHK…VMYA. The span at 18–32 shows a compositional bias: low complexity; that stretch reads NQSSANTQNQQAHQQ. Residues 83–92 show a composition bias toward polar residues; that stretch reads VSATSAYSKQ. A compositionally biased stretch (low complexity) spans 161–223; the sequence is TTTSSSTSTS…STSTTSTSTT (63 aa). The segment covering 246 to 260 has biased composition (polar residues); sequence ESTSIGKGTADSAQI. Ser286 is subject to Phosphoserine. Residues 292-316 show a composition bias toward basic and acidic residues; sequence DEQKEEKSDVKKVNPPSGEEKKEVE. The span at 317–326 shows a compositional bias: acidic residues; that stretch reads AEGDAEEETE. Over residues 327-342 the composition is skewed to low complexity; the sequence is QSSAEESAERTSTPET. Phosphoserine occurs at positions 343 and 347. A compositionally biased stretch (acidic residues) spans 343-353; sequence SEPESEEDESP. Residues 380-396 are compositionally biased toward low complexity; sequence KSPTSSSTQKSKTAAPS. 2 stretches are compositionally biased toward basic and acidic residues: residues 770–792 and 799–816; these read RQHK…DRSQ and PKDD…VMYA. Residue Thr809 is modified to Phosphothreonine.

Pyrophosphorylated by 5-diphosphoinositol pentakisphosphate (5-IP7). Serine pyrophosphorylation is achieved by Mg(2+)-dependent, but enzyme independent transfer of a beta-phosphate from a inositol pyrophosphate to a pre-phosphorylated serine residue.

This is an uncharacterized protein from Saccharomyces cerevisiae (strain ATCC 204508 / S288c) (Baker's yeast).